The chain runs to 391 residues: Probable FAD-dependent oxidoreductase PA4991 (391 aa).

FAD is bound by residues Ala17, Glu36, 44–45 (QS), 49–51 (QGI), and 346–347 (LA).

The protein belongs to the DAO family. Monomer. It depends on FAD as a cofactor.

Its function is as follows. Probably functions as a FAD-dependent oxidoreductase, whose physiological substrate is unknown. Does not display amino-acid oxidase or glycerol-3-phosphate dehydrogenase activities. Is essential for growth of P.aeruginosa in the sputum of cystic fibrosis patients. This is Probable FAD-dependent oxidoreductase PA4991 from Pseudomonas aeruginosa (strain ATCC 15692 / DSM 22644 / CIP 104116 / JCM 14847 / LMG 12228 / 1C / PRS 101 / PAO1).